Here is a 361-residue protein sequence, read N- to C-terminus: Aromatic amino acid aminotransferase (361 aa).

Lysine 215 bears the N6-(pyridoxal phosphate)lysine mark.

The protein belongs to the class-II pyridoxal-phosphate-dependent aminotransferase family. As to quaternary structure, homodimer. Pyridoxal 5'-phosphate is required as a cofactor.

The catalysed reaction is an aromatic L-alpha-amino acid + 2-oxoglutarate = an aromatic oxo-acid + L-glutamate. In terms of biological role, aminotransferase that catalyzes the conversion of aromatic amino acids and 2-oxoglutarate into corresponding aromatic oxo acids and L-glutamate. This is Aromatic amino acid aminotransferase from Mycolicibacterium smegmatis (strain ATCC 700084 / mc(2)155) (Mycobacterium smegmatis).